Consider the following 227-residue polypeptide: MMLHIPQVLSKAKVAELRALIDAAPWVDGNETSGTQSALAKRNAQLPEGSPAATQAGEAILDALERNPLFVAAALPQVVFPPLFNRYAGGEAFGLHVDNSIRQSRDGRTRIRSDLSATLFLTEPEDYDGGVLVVEDTFGAHEVKLPAGDMILYPASSLHEVTPVTRGARVCSFFWIQSLVREDARRELLFQMDLAIQQLGARIGADAPELVSLTGGYHNLLRMWAEV.

A Fe2OG dioxygenase domain is found at 78–178; sequence VVFPPLFNRY…RVCSFFWIQS (101 aa). Positions 96, 98, and 159 each coordinate Fe cation. Residue arginine 169 coordinates 2-oxoglutarate.

Requires Fe(2+) as cofactor. It depends on L-ascorbate as a cofactor.

This Phenylobacterium zucineum (strain HLK1) protein is PKHD-type hydroxylase PHZ_c0292.